Here is a 307-residue protein sequence, read N- to C-terminus: tRNA dimethylallyltransferase 1 (307 aa).

ATP is bound at residue 10-17 (GPTASGKT). Position 12–17 (12–17 (TASGKT)) interacts with substrate. Positions 35-38 (DSRQ) are interaction with substrate tRNA.

The protein belongs to the IPP transferase family. Monomer. It depends on Mg(2+) as a cofactor.

The catalysed reaction is adenosine(37) in tRNA + dimethylallyl diphosphate = N(6)-dimethylallyladenosine(37) in tRNA + diphosphate. Catalyzes the transfer of a dimethylallyl group onto the adenine at position 37 in tRNAs that read codons beginning with uridine, leading to the formation of N6-(dimethylallyl)adenosine (i(6)A). The sequence is that of tRNA dimethylallyltransferase 1 from Geotalea daltonii (strain DSM 22248 / JCM 15807 / FRC-32) (Geobacter daltonii).